Reading from the N-terminus, the 59-residue chain is Metallothionein-1B (59 aa).

The beta stretch occupies residues 1–29 (MPGPCCNDKCVCQEGGCKAGCQCTSCRCS). The a divalent metal cation site is built by cysteine 5, cysteine 6, cysteine 10, cysteine 17, cysteine 21, cysteine 23, cysteine 26, cysteine 28, cysteine 31, cysteine 34, cysteine 38, cysteine 40, cysteine 46, cysteine 50, cysteine 54, cysteine 56, and cysteine 57. Residues 30-59 (PCQKCTSGCKCATKEECSKTCTKPCSCCPK) form an alpha region.

It belongs to the metallothionein superfamily. Type 3 family.

Its function is as follows. Binds six divalent metal ions. Known to bind copper and cadmium. The polypeptide is Metallothionein-1B (Callinectes sapidus (Blue crab)).